Here is a 466-residue protein sequence, read N- to C-terminus: Asparagine--tRNA ligase (466 aa).

The protein belongs to the class-II aminoacyl-tRNA synthetase family. As to quaternary structure, homodimer.

Its subcellular location is the cytoplasm. The catalysed reaction is tRNA(Asn) + L-asparagine + ATP = L-asparaginyl-tRNA(Asn) + AMP + diphosphate + H(+). This is Asparagine--tRNA ligase from Buchnera aphidicola subsp. Baizongia pistaciae (strain Bp).